The chain runs to 212 residues: Protein irg-1 (212 aa).

In terms of tissue distribution, expressed in the intestine.

Its function is as follows. Plays a role in innate immunity by conferring resistance to virulent strains of the Gram-negative bacterium P.aeruginosa via the zip-2 pathway. Can act independently of several immunity-related pathways including pmk-1 p38MAPK, dbl-1 TGF-beta, kgb-1 JNK and bar-1/beta-catenin pathways. This Caenorhabditis elegans protein is Protein irg-1.